Consider the following 82-residue polypeptide: Progonadoliberin-3 (82 aa).

An N-terminal signal peptide occupies residues 1–23 (MDLSNRTVVQVVVLALVAQVTLS). Residue Q24 is modified to Pyrrolidone carboxylic acid. At G33 the chain carries Glycine amide.

This sequence belongs to the GnRH family.

It localises to the secreted. Its function is as follows. Stimulates the secretion of gonadotropins. The protein is Progonadoliberin-3 (gnrh3) of Salmo trutta (Brown trout).